The primary structure comprises 916 residues: Internalin J (916 aa).

Positions 1 to 25 are cleaved as a signal peptide; it reads MKTSKIIIASLVSLTLVSNPILTFA. LRR repeat units lie at residues 94 to 115, 116 to 136, 137 to 157, 158 to 179, 180 to 200, 201 to 221, 222 to 243, 244 to 263, 264 to 284, 285 to 306, 316 to 325, 338 to 357, 359 to 368, and 380 to 402; these read TLTS…EKLT, GLTK…SQNT, NLTY…TPLT, KLTY…QNPL, LTYL…HNTQ, LTEL…TPQT, QLTT…QNKL, LNRL…NQNI, QLTF…TPLT, QLTY…TLSK, DLLEIDLTHN, KIKE…DCQA, GITELDLSQN, and ELTK…NAHI. MucBP domains follow at residues 506–568, 576–638, 646–708, 717–779, and 787–849; these read PIKG…SQSV, IVAA…SQTV, IVAA…AQTV, and APEK…SQTV. Residues 862 to 888 are disordered; it reads PLPDKKTTKPSNLKTTEVKKASDTLPK. The LPXTG sorting signal motif lies at 886-890; it reads LPKTG. Residue T889 is modified to Pentaglycyl murein peptidoglycan amidated threonine. Residues 890 to 916 constitute a propeptide, removed by sortase; sequence GDSTPWKSALLGVFLSSTALVIWKKKK.

Belongs to the internalin family.

The protein resides in the secreted. The protein localises to the cell wall. In terms of biological role, involved in several steps of L.monocytogenes infection, probably improves adhesin to host cells. The chain is Internalin J (inlJ) from Listeria monocytogenes serotype 4b (strain F2365).